The following is a 217-amino-acid chain: Deoxyribose-phosphate aldolase 1 (217 aa).

D89 acts as the Proton donor/acceptor in catalysis. The active-site Schiff-base intermediate with acetaldehyde is the K151. K180 acts as the Proton donor/acceptor in catalysis.

Belongs to the DeoC/FbaB aldolase family. DeoC type 1 subfamily.

Its subcellular location is the cytoplasm. It carries out the reaction 2-deoxy-D-ribose 5-phosphate = D-glyceraldehyde 3-phosphate + acetaldehyde. It functions in the pathway carbohydrate degradation; 2-deoxy-D-ribose 1-phosphate degradation; D-glyceraldehyde 3-phosphate and acetaldehyde from 2-deoxy-alpha-D-ribose 1-phosphate: step 2/2. In terms of biological role, catalyzes a reversible aldol reaction between acetaldehyde and D-glyceraldehyde 3-phosphate to generate 2-deoxy-D-ribose 5-phosphate. In Cutibacterium acnes (strain DSM 16379 / KPA171202) (Propionibacterium acnes), this protein is Deoxyribose-phosphate aldolase 1.